Reading from the N-terminus, the 276-residue chain is Putative pyridoxine kinase (276 aa).

Residue N139 participates in ATP binding. E142 is a binding site for Mg(2+). Residues 176 to 180, D188, G213, and K238 each bind ATP; that span reads KGGKA.

Belongs to the ThiD family.

It carries out the reaction pyridoxal + ATP = pyridoxal 5'-phosphate + ADP + H(+). Functionally, phosphorylates B6 vitamers; functions in a salvage pathway. Uses pyridoxal, pyridoxine, and pyridoxamine as substrates. The chain is Putative pyridoxine kinase (pdxK) from Staphylococcus epidermidis (strain ATCC 35984 / DSM 28319 / BCRC 17069 / CCUG 31568 / BM 3577 / RP62A).